The chain runs to 267 residues: MTQTDLNNTEQKPVMVLKVGGALLQCDMGMSRLMQAAAKIIASGQPIIMVHGGGCLVDEQLKANGMITEKLDGLRVTPEAQIPVIVGALAGTSNKTLQAAAIKAGVTCLGMSLADAGMMNAKIKDPLLGLVGEVEPKDASYLEFVLAKGWMPIVSSIAISEQGEMLNVNADQAATALAKLVSGSLVLLSDVSGVLDGKGQLINSLNREQVNELTKIGVIEKGMKVKVEAALDVAESMGQAVQIASWRHAHQLIALCQGEAVGTQIQP.

Substrate is bound by residues Gly53–Gly54, Arg75, and Asn167.

Belongs to the acetylglutamate kinase family. ArgB subfamily.

The protein localises to the cytoplasm. It catalyses the reaction N-acetyl-L-glutamate + ATP = N-acetyl-L-glutamyl 5-phosphate + ADP. It functions in the pathway amino-acid biosynthesis; L-arginine biosynthesis; N(2)-acetyl-L-ornithine from L-glutamate: step 2/4. Its function is as follows. Catalyzes the ATP-dependent phosphorylation of N-acetyl-L-glutamate. The chain is Acetylglutamate kinase from Shewanella pealeana (strain ATCC 700345 / ANG-SQ1).